The primary structure comprises 927 residues: Isoleucine--tRNA ligase (927 aa).

The 'HIGH' region signature appears at 57-67 (PFANGNIHMGH). Glu-553 serves as a coordination point for L-isoleucyl-5'-AMP. The 'KMSKS' region motif lies at 594–598 (KMSKS). ATP is bound at residue Lys-597. Residues Cys-886, Cys-889, Cys-906, and Cys-909 each contribute to the Zn(2+) site.

Belongs to the class-I aminoacyl-tRNA synthetase family. IleS type 1 subfamily. Monomer. The cofactor is Zn(2+).

The protein localises to the cytoplasm. The enzyme catalyses tRNA(Ile) + L-isoleucine + ATP = L-isoleucyl-tRNA(Ile) + AMP + diphosphate. In terms of biological role, catalyzes the attachment of isoleucine to tRNA(Ile). As IleRS can inadvertently accommodate and process structurally similar amino acids such as valine, to avoid such errors it has two additional distinct tRNA(Ile)-dependent editing activities. One activity is designated as 'pretransfer' editing and involves the hydrolysis of activated Val-AMP. The other activity is designated 'posttransfer' editing and involves deacylation of mischarged Val-tRNA(Ile). In Lactobacillus helveticus (strain DPC 4571), this protein is Isoleucine--tRNA ligase.